A 337-amino-acid chain; its full sequence is tRNA N6-adenosine threonylcarbamoyltransferase (337 aa).

2 residues coordinate Fe cation: H111 and H115. Substrate contacts are provided by residues L134 to G138, D167, G180, and N272. D300 provides a ligand contact to Fe cation.

The protein belongs to the KAE1 / TsaD family. The cofactor is Fe(2+).

It localises to the cytoplasm. It carries out the reaction L-threonylcarbamoyladenylate + adenosine(37) in tRNA = N(6)-L-threonylcarbamoyladenosine(37) in tRNA + AMP + H(+). Functionally, required for the formation of a threonylcarbamoyl group on adenosine at position 37 (t(6)A37) in tRNAs that read codons beginning with adenine. Is involved in the transfer of the threonylcarbamoyl moiety of threonylcarbamoyl-AMP (TC-AMP) to the N6 group of A37, together with TsaE and TsaB. TsaD likely plays a direct catalytic role in this reaction. This chain is tRNA N6-adenosine threonylcarbamoyltransferase, found in Salmonella newport (strain SL254).